Here is a 1052-residue protein sequence, read N- to C-terminus: Protein argonaute 14 (1052 aa).

Residues 1–39 (MASRGGDGLVGGGRGPLGGRDGRGRGPAGGRGGGRGGGH) are compositionally biased toward gly residues. 2 disordered regions span residues 1–127 (MASR…TPAV) and 170–194 (GGRP…APPS). Over residues 40 to 49 (PQQQQQQQPG) the composition is skewed to low complexity. Composition is skewed to gly residues over residues 50–59 (YGRGDGGGRG) and 66–81 (GVVG…GGRG). The span at 97 to 117 (VRPAMAAAPAASTPGPVAVAA) shows a compositional bias: low complexity. The segment covering 173-183 (PAPPAAPPAPI) has biased composition (pro residues). One can recognise a PAZ domain in the interval 394-510 (SVVEYVKNCL…LPMEVCTIVE (117 aa)). In terms of domain architecture, Piwi spans 677 to 1009 (LLIVILPDVN…AAFRARYYDE (333 aa)).

The protein belongs to the argonaute family. Ago subfamily. Expressed in seeds.

Probably involved in the RNA silencing pathway. May bind to short RNAs such as microRNAs (miRNAs) or short interfering RNAs (siRNAs), and represses the translation of mRNAs which are complementary to them. This Oryza sativa subsp. japonica (Rice) protein is Protein argonaute 14 (AGO14).